A 572-amino-acid chain; its full sequence is Golgi apyrase (572 aa).

At 1–470 (MVRKYGIFID…KHWMRLFPNK (470 aa)) the chain is on the lumenal side. The active-site Proton acceptor is the Glu145. The chain crosses the membrane as a helical span at residues 471-491 (LFFILSFIFCLFFLFSLVLFG). Residues 492–572 (YDPKRRQRFK…RERTPRSPFP (81 aa)) lie on the Cytoplasmic side of the membrane.

It belongs to the GDA1/CD39 NTPase family. It depends on Ca(2+) as a cofactor. Requires Mg(2+) as cofactor. Mn(2+) is required as a cofactor.

The protein localises to the golgi apparatus. It localises to the membrane. It catalyses the reaction a ribonucleoside 5'-triphosphate + 2 H2O = a ribonucleoside 5'-phosphate + 2 phosphate + 2 H(+). It functions in the pathway protein modification; protein glycosylation. Catalyzes the hydrolysis of phosphoanhydride bonds of nucleoside tri- and di-phosphates. Required for Golgi glycosylation and cell wall integrity. Involved in N-mannosylation of proteins in Golgi. The polypeptide is Golgi apyrase (Schizosaccharomyces pombe (strain 972 / ATCC 24843) (Fission yeast)).